A 584-amino-acid polypeptide reads, in one-letter code: Complement component C8 alpha chain (584 aa).

The first 20 residues, 1-20 (MFAVVFFILSLMTCQPGVTA), serve as a signal peptide directing secretion. A propeptide spanning residues 21-30 (QEKVNQRVRR) is cleaved from the precursor. A TSP type-1 1 domain is found at 38 to 91 (TCQLSNWSEWTDCFPCQDKKYRHRSLLQPNKFGGTICSGDIWDQASCSSSTTCV). Cystine bridges form between Cys39–Cys74, Cys50–Cys84, Cys53–Cys90, Cys96–Cys108, Cys102–Cys121, Cys115–Cys130, and Cys140–Cys177. C-linked (Man) tryptophan glycosylation occurs at Trp44. In terms of domain architecture, LDL-receptor class A spans 94-132 (AQCGQDFQCKETGRCLKRHLVCNGDQDCLDGSDEDDCED). Ca(2+) is bound by residues Leu113, Asn116, Asp118, Asp120, Asp126, and Glu127. In terms of domain architecture, MACPF spans 135–498 (AIDEDCSQYE…QYLMEFNACR (364 aa)). 4 consecutive transmembrane segments (beta stranded) span residues 248–256 (FGVTIGIGP), 259–266 (SPLLVGVG), 377–384 (GGSLGIQY), and 390–395 (VGGGLS). An intrachain disulfide couples Cys375 to Cys399. The N-linked (GlcNAc...) asparagine glycan is linked to Asn437. Intrachain disulfides connect Cys497-Cys544, Cys499-Cys515, Cys502-Cys517, and Cys519-Cys528. The EGF-like domain maps to 499 to 529 (CGPCFNNGVPILEGTSCRCQCRLGSLGAACE). Residues 539–583 (DGSWSCWSSWSVCRAGIQERRRECDNPAPQNGGASCPGRKVQTQA) enclose the TSP type-1 2 domain. Residues Trp542, Trp545, and Trp548 are each glycosylated (C-linked (Man) tryptophan). 2 disulfides stabilise this stretch: Cys551/Cys584 and Cys562/Cys574. The segment at 562 to 584 (CDNPAPQNGGASCPGRKVQTQAC) is disordered.

This sequence belongs to the complement C6/C7/C8/C9 family. As to quaternary structure, heterotrimer of 3 chains: alpha (C8A), beta (C8B) and gamma (C8G); the alpha and gamma chains are disulfide bonded. Component of the membrane attack complex (MAC), composed of complement C5b, C6, C7, C8A, C8B, C8G and multiple copies of the pore-forming subunit C9.

The protein resides in the secreted. It is found in the target cell membrane. Membrane attack complex (MAC) assembly is inhibited by CD59, thereby protecting self-cells from damage during complement activation. CD59 acts by binding to the beta-haipins of C8 (C8A and C8B), forming an intermolecular beta-sheet that prevents incorporation of the multiple copies of C9 required for complete formation of the osmolytic pore. MAC assembly is also inhibited by clusterin (CLU) chaperones that inhibit polymerization of C9. In terms of biological role, component of the membrane attack complex (MAC), a multiprotein complex activated by the complement cascade, which inserts into a target cell membrane and forms a pore, leading to target cell membrane rupture and cell lysis. The MAC is initiated by proteolytic cleavage of C5 into complement C5b in response to the classical, alternative, lectin and GZMK complement pathways. The complement pathways consist in a cascade of proteins that leads to phagocytosis and breakdown of pathogens and signaling that strengthens the adaptive immune system. C8A, together with C8B and C8G, inserts into the target membrane, but does not form pores by itself. During MAC assembly, associates with C5b, C6 and C7 to form the C5b8 intermediate complex that inserts into the target membrane and traverses the bilayer increasing membrane rigidity. This is Complement component C8 alpha chain from Homo sapiens (Human).